Reading from the N-terminus, the 344-residue chain is Phenylalanine--tRNA ligase alpha subunit (344 aa).

Glu256 contacts Mg(2+).

The protein belongs to the class-II aminoacyl-tRNA synthetase family. Phe-tRNA synthetase alpha subunit type 1 subfamily. Tetramer of two alpha and two beta subunits. Mg(2+) serves as cofactor.

The protein resides in the cytoplasm. It carries out the reaction tRNA(Phe) + L-phenylalanine + ATP = L-phenylalanyl-tRNA(Phe) + AMP + diphosphate + H(+). This is Phenylalanine--tRNA ligase alpha subunit from Shouchella clausii (strain KSM-K16) (Alkalihalobacillus clausii).